A 319-amino-acid polypeptide reads, in one-letter code: MGFNINIIGTGGTRPLHNRYLSSVLIEYDGDNFLFDCGEGTQMSLRKQKISWQKIKMICITHLHADHITGLLGIVMLMSQSGETRKEPLIIAGPVGIKNYTQANINMLKIYKNYEIIYKEIIIDKTEKIIYEDKTKKIEYTKLKHSIECVGYLFIEKDKPGKFNTEKAEELNIPKGPIRKALQDGKEILVNGKIIKPSEILGKSKKGLKVAYITDTGYFKELIQQIKNFNLVIIESTFKNELKKEADKKLHLTAGGAANIVKQAKVLQTGLIHFSERYTLRKDLENLLKEAKLEHPDGEIFLTRDGMRLEANKNNFIIK.

His62, His64, Asp66, His67, His145, Asp215, and His273 together coordinate Zn(2+). The active-site Proton acceptor is the Asp66.

It belongs to the RNase Z family. As to quaternary structure, homodimer. The cofactor is Zn(2+).

The enzyme catalyses Endonucleolytic cleavage of RNA, removing extra 3' nucleotides from tRNA precursor, generating 3' termini of tRNAs. A 3'-hydroxy group is left at the tRNA terminus and a 5'-phosphoryl group is left at the trailer molecule.. Its function is as follows. Zinc phosphodiesterase, which displays some tRNA 3'-processing endonuclease activity. Probably involved in tRNA maturation, by removing a 3'-trailer from precursor tRNA. The polypeptide is Ribonuclease Z (Borreliella burgdorferi (strain ATCC 35210 / DSM 4680 / CIP 102532 / B31) (Borrelia burgdorferi)).